Here is a 262-residue protein sequence, read N- to C-terminus: Acyl-[acyl-carrier-protein]--UDP-N-acetylglucosamine O-acyltransferase (262 aa).

The protein belongs to the transferase hexapeptide repeat family. LpxA subfamily. As to quaternary structure, homotrimer.

Its subcellular location is the cytoplasm. It carries out the reaction a (3R)-hydroxyacyl-[ACP] + UDP-N-acetyl-alpha-D-glucosamine = a UDP-3-O-[(3R)-3-hydroxyacyl]-N-acetyl-alpha-D-glucosamine + holo-[ACP]. The protein operates within glycolipid biosynthesis; lipid IV(A) biosynthesis; lipid IV(A) from (3R)-3-hydroxytetradecanoyl-[acyl-carrier-protein] and UDP-N-acetyl-alpha-D-glucosamine: step 1/6. Its function is as follows. Involved in the biosynthesis of lipid A, a phosphorylated glycolipid that anchors the lipopolysaccharide to the outer membrane of the cell. The chain is Acyl-[acyl-carrier-protein]--UDP-N-acetylglucosamine O-acyltransferase from Vibrio campbellii (strain ATCC BAA-1116).